The chain runs to 176 residues: ATP synthase subunit delta (176 aa).

It belongs to the ATPase delta chain family. In terms of assembly, F-type ATPases have 2 components, F(1) - the catalytic core - and F(0) - the membrane proton channel. F(1) has five subunits: alpha(3), beta(3), gamma(1), delta(1), epsilon(1). F(0) has three main subunits: a(1), b(2) and c(10-14). The alpha and beta chains form an alternating ring which encloses part of the gamma chain. F(1) is attached to F(0) by a central stalk formed by the gamma and epsilon chains, while a peripheral stalk is formed by the delta and b chains.

The protein localises to the cell membrane. Its function is as follows. F(1)F(0) ATP synthase produces ATP from ADP in the presence of a proton or sodium gradient. F-type ATPases consist of two structural domains, F(1) containing the extramembraneous catalytic core and F(0) containing the membrane proton channel, linked together by a central stalk and a peripheral stalk. During catalysis, ATP synthesis in the catalytic domain of F(1) is coupled via a rotary mechanism of the central stalk subunits to proton translocation. In terms of biological role, this protein is part of the stalk that links CF(0) to CF(1). It either transmits conformational changes from CF(0) to CF(1) or is implicated in proton conduction. This chain is ATP synthase subunit delta, found in Hamiltonella defensa subsp. Acyrthosiphon pisum (strain 5AT).